The sequence spans 369 residues: Peptide chain release factor 2 (369 aa).

Q251 is subject to N5-methylglutamine.

The protein belongs to the prokaryotic/mitochondrial release factor family. In terms of processing, methylated by PrmC. Methylation increases the termination efficiency of RF2.

The protein localises to the cytoplasm. Its function is as follows. Peptide chain release factor 2 directs the termination of translation in response to the peptide chain termination codons UGA and UAA. The protein is Peptide chain release factor 2 of Chlamydia trachomatis serovar A (strain ATCC VR-571B / DSM 19440 / HAR-13).